The following is a 329-amino-acid chain: uncharacterized protein (329 aa).

An N-terminal signal peptide occupies residues 1–22; sequence MPLCNNFSGNLVVAVALFFAGA.

This is an uncharacterized protein from Arabidopsis thaliana (Mouse-ear cress).